The chain runs to 80 residues: Moroidotoxin A (80 aa).

Positions 1-27 (MAAVKKHLRFALVAAITIALLVAGSVA) are cleaved as a signal peptide. A propeptide spanning residues 28-44 (DESSEDIDNIVIKTPLD) is cleaved from the precursor. 3 cysteine pairs are disulfide-bonded: Cys48-Cys65, Cys53-Cys67, and Cys61-Cys76.

It belongs to the gympietide family. As to expression, expressed in trichomes, that are stiff epidermal hairs located on the surface of petioles and leaves. Not expressed in other aerial parts.

It localises to the secreted. Neurotoxin certainly responsible for the defensive, persistent, and painful stings of the giant stinging tree. Inhibits inactivation of Nav1.7/SCN9A sodium channel in sensory neurons by directly interacting with TMEM233, a newly described Nav-interacting protein. Has virtually no effect on Nav1.7/SCN9A function in heterologous expression systems and in neurons that do not express TMEM233. Also weakly but significantly affects Nav1.8/SCN10A. Coexpression of TMEM233 with Nav also confers ExTxA sensitivity to Nav1.1-Nav1.6. On the Nav1.7/SCN9A channel, causes a significant hyperpolarizing shift in the voltage dependence of activation. Its effects on Nav currents are irreversible, with no apparent reduction in activity even after repeated wash steps over 30 minutes. In vivo, induces nocifensive behavior in mice (licking or biting and shaking or lifting of the affected paw) lasting for approximately 1 hour. The sequence is that of Moroidotoxin A from Dendrocnide moroides (Gympie stinging tree).